Here is a 464-residue protein sequence, read N- to C-terminus: Asparagine--tRNA ligase (464 aa).

Belongs to the class-II aminoacyl-tRNA synthetase family. In terms of assembly, homodimer.

The protein localises to the cytoplasm. The catalysed reaction is tRNA(Asn) + L-asparagine + ATP = L-asparaginyl-tRNA(Asn) + AMP + diphosphate + H(+). The chain is Asparagine--tRNA ligase from Xanthomonas campestris pv. campestris (strain 8004).